Reading from the N-terminus, the 287-residue chain is Probable 18S rRNA (guanine-N(7))-methyltransferase (287 aa).

The tract at residues 214–287 (GVEGEEYEQQ…FSGRKRGPKF (74 aa)) is disordered. Positions 217 to 228 (GEEYEQQEEEDS) are enriched in acidic residues. The segment covering 234 to 245 (SNRKRDRRRVTK) has biased composition (basic residues). Positions 253 to 278 (KTKEWIMNKKDRQRKQGREIKNDSKF) are enriched in basic and acidic residues.

The protein belongs to the class I-like SAM-binding methyltransferase superfamily. BUD23/WBSCR22 family.

It is found in the nucleus. It localises to the nucleoplasm. Its subcellular location is the cytoplasm. The protein resides in the perinuclear region. The enzyme catalyses a guanosine in 18S rRNA + S-adenosyl-L-methionine = an N(7)-methylguanosine in 18S rRNA + S-adenosyl-L-homocysteine. Its function is as follows. S-adenosyl-L-methionine-dependent methyltransferase that specifically methylates the N(7) position of a guanine in 18S rRNA. Important for biogenesis end export of the 40S ribosomal subunit independent on its methyltransferase activity. In terms of biological role, S-adenosyl-L-methionine-dependent methyltransferase that specifically methylates the N(7) position of a guanine in 18S rRNA. Requires the methyltransferase adapter protein TRM112 for full rRNA methyltransferase activity. Involved in the pre-rRNA processing steps leading to small-subunit rRNA production independently of its RNA-modifying catalytic activity. Important for biogenesis end export of the 40S ribosomal subunit independent on its methyltransferase activity. This is Probable 18S rRNA (guanine-N(7))-methyltransferase from Dictyostelium discoideum (Social amoeba).